Here is a 389-residue protein sequence, read N- to C-terminus: Succinate--CoA ligase [ADP-forming] subunit beta (389 aa).

An ATP-grasp domain is found at 9–244 (KAVLAKYGVP…LTEEDPAEVE (236 aa)). ATP is bound by residues K46, 53 to 55 (GRG), E99, S102, and E107. Residues N199 and D213 each contribute to the Mg(2+) site. Substrate contacts are provided by residues N264 and 321-323 (GIM).

Belongs to the succinate/malate CoA ligase beta subunit family. Heterotetramer of two alpha and two beta subunits. Mg(2+) is required as a cofactor.

The enzyme catalyses succinate + ATP + CoA = succinyl-CoA + ADP + phosphate. The catalysed reaction is GTP + succinate + CoA = succinyl-CoA + GDP + phosphate. It functions in the pathway carbohydrate metabolism; tricarboxylic acid cycle; succinate from succinyl-CoA (ligase route): step 1/1. Succinyl-CoA synthetase functions in the citric acid cycle (TCA), coupling the hydrolysis of succinyl-CoA to the synthesis of either ATP or GTP and thus represents the only step of substrate-level phosphorylation in the TCA. The beta subunit provides nucleotide specificity of the enzyme and binds the substrate succinate, while the binding sites for coenzyme A and phosphate are found in the alpha subunit. This chain is Succinate--CoA ligase [ADP-forming] subunit beta, found in Parvibaculum lavamentivorans (strain DS-1 / DSM 13023 / NCIMB 13966).